The primary structure comprises 395 residues: Argininosuccinate synthase (395 aa).

8–16 (AYSGGLDTS) contributes to the ATP binding site. Tyr86 serves as a coordination point for L-citrulline. Gly116 is an ATP binding site. Positions 118, 122, and 123 each coordinate L-aspartate. Asn122 contributes to the L-citrulline binding site. L-citrulline-binding residues include Arg126, Ser173, Ser182, Glu257, and Tyr269.

The protein belongs to the argininosuccinate synthase family. Type 1 subfamily. In terms of assembly, homotetramer.

It localises to the cytoplasm. The enzyme catalyses L-citrulline + L-aspartate + ATP = 2-(N(omega)-L-arginino)succinate + AMP + diphosphate + H(+). It participates in amino-acid biosynthesis; L-arginine biosynthesis; L-arginine from L-ornithine and carbamoyl phosphate: step 2/3. The polypeptide is Argininosuccinate synthase (Methanocaldococcus jannaschii (strain ATCC 43067 / DSM 2661 / JAL-1 / JCM 10045 / NBRC 100440) (Methanococcus jannaschii)).